The sequence spans 813 residues: Leucine--tRNA ligase (813 aa).

The 'HIGH' region motif lies at 42–52 (PYTSGNLHIGH). Positions 580-584 (KMSKS) match the 'KMSKS' region motif. Residue Lys-583 participates in ATP binding.

It belongs to the class-I aminoacyl-tRNA synthetase family.

The protein resides in the cytoplasm. The enzyme catalyses tRNA(Leu) + L-leucine + ATP = L-leucyl-tRNA(Leu) + AMP + diphosphate. This Dehalococcoides mccartyi (strain ATCC BAA-2266 / KCTC 15142 / 195) (Dehalococcoides ethenogenes (strain 195)) protein is Leucine--tRNA ligase.